We begin with the raw amino-acid sequence, 479 residues long: Ribosomal RNA small subunit methyltransferase F (479 aa).

Residues 125 to 131 (AAAPGSK), glutamate 149, aspartate 176, and aspartate 194 contribute to the S-adenosyl-L-methionine site. The Nucleophile role is filled by cysteine 247.

Belongs to the class I-like SAM-binding methyltransferase superfamily. RsmB/NOP family.

It localises to the cytoplasm. The catalysed reaction is cytidine(1407) in 16S rRNA + S-adenosyl-L-methionine = 5-methylcytidine(1407) in 16S rRNA + S-adenosyl-L-homocysteine + H(+). Specifically methylates the cytosine at position 1407 (m5C1407) of 16S rRNA. The sequence is that of Ribosomal RNA small subunit methyltransferase F from Salmonella typhi.